A 558-amino-acid polypeptide reads, in one-letter code: Kelch-like protein 23 (558 aa).

The 69-residue stretch at Thr-36–Lys-104 folds into the BTB domain. In terms of domain architecture, BACK spans Cys-139–Gly-240. 6 Kelch repeats span residues Thr-274–Pro-320, Asn-321–Gly-369, Cys-370–Glu-416, Ile-418–Asn-466, Lys-467–Gly-508, and Ile-510–Asn-557.

In Mus musculus (Mouse), this protein is Kelch-like protein 23 (Klhl23).